A 271-amino-acid polypeptide reads, in one-letter code: uncharacterized protein (271 aa).

Belongs to the HAD-like hydrolase superfamily.

This is an uncharacterized protein from Staphylococcus aureus (strain MRSA252).